We begin with the raw amino-acid sequence, 251 residues long: Triosephosphate isomerase (251 aa).

12 to 14 serves as a coordination point for substrate; it reads NWK. The active-site Electrophile is H99. The Proton acceptor role is filled by E169. Residues G175, S214, and 235–236 contribute to the substrate site; that span reads GG.

This sequence belongs to the triosephosphate isomerase family. As to quaternary structure, homodimer.

The protein resides in the cytoplasm. The enzyme catalyses D-glyceraldehyde 3-phosphate = dihydroxyacetone phosphate. It participates in carbohydrate biosynthesis; gluconeogenesis. It functions in the pathway carbohydrate degradation; glycolysis; D-glyceraldehyde 3-phosphate from glycerone phosphate: step 1/1. Its function is as follows. Involved in the gluconeogenesis. Catalyzes stereospecifically the conversion of dihydroxyacetone phosphate (DHAP) to D-glyceraldehyde-3-phosphate (G3P). This is Triosephosphate isomerase from Bradyrhizobium sp. (strain BTAi1 / ATCC BAA-1182).